A 110-amino-acid chain; its full sequence is Large ribosomal subunit protein uL22 (110 aa).

It belongs to the universal ribosomal protein uL22 family. In terms of assembly, part of the 50S ribosomal subunit.

In terms of biological role, this protein binds specifically to 23S rRNA; its binding is stimulated by other ribosomal proteins, e.g. L4, L17, and L20. It is important during the early stages of 50S assembly. It makes multiple contacts with different domains of the 23S rRNA in the assembled 50S subunit and ribosome. Functionally, the globular domain of the protein is located near the polypeptide exit tunnel on the outside of the subunit, while an extended beta-hairpin is found that lines the wall of the exit tunnel in the center of the 70S ribosome. This chain is Large ribosomal subunit protein uL22, found in Colwellia psychrerythraea (strain 34H / ATCC BAA-681) (Vibrio psychroerythus).